Here is a 52-residue protein sequence, read N- to C-terminus: Ornatin-B (52 aa).

The Cell attachment site signature appears at 42 to 44 (RGD).

Belongs to the ornatin family.

The protein resides in the secreted. Its function is as follows. Potent inhibitor of fibrinogen interaction with platelet receptors expressed on glycoprotein IIb-IIIa complex. May prevent blood from clotting during either feeding and/or storage of ingested blood. This is Ornatin-B from Placobdella ornata (Turtle leech).